The chain runs to 132 residues: Small ribosomal subunit protein uS8 (132 aa).

Belongs to the universal ribosomal protein uS8 family. As to quaternary structure, part of the 30S ribosomal subunit. Contacts proteins S5 and S12.

One of the primary rRNA binding proteins, it binds directly to 16S rRNA central domain where it helps coordinate assembly of the platform of the 30S subunit. This is Small ribosomal subunit protein uS8 from Lactobacillus helveticus (strain DPC 4571).